The sequence spans 260 residues: Exosome complex component Rrp42 (260 aa).

It belongs to the RNase PH family. Rrp42 subfamily. As to quaternary structure, component of the archaeal exosome complex. Forms a hexameric ring-like arrangement composed of 3 Rrp41-Rrp42 heterodimers. The hexameric ring associates with a trimer of Rrp4 and/or Csl4 subunits.

The protein resides in the cytoplasm. Its function is as follows. Non-catalytic component of the exosome, which is a complex involved in RNA degradation. Contributes to the structuring of the Rrp41 active site. This chain is Exosome complex component Rrp42, found in Thermoplasma volcanium (strain ATCC 51530 / DSM 4299 / JCM 9571 / NBRC 15438 / GSS1).